The chain runs to 303 residues: Aquaporin-7 (303 aa).

The Cytoplasmic portion of the chain corresponds to 1-21 (MAPRSVLETIQSVLQKNMVRE). Serine 5 bears the Phosphoserine mark. Residues 22 to 39 (FLAEFLSTYVMMVFGLGS) form a helical membrane-spanning segment. Residues 40–52 (VAHMVLGENSGSY) lie on the Extracellular side of the membrane. Residues 53 to 70 (LGVNLGFGFGVTMGVHVA) traverse the membrane as a helical segment. Residues 71-74 (GGIS) are Cytoplasmic-facing. The segment at residues 75–88 (GAHMNAAVTFTNCA) is an intramembrane region (discontinuously helical). The NPA 1 signature appears at 79–81 (NAA). Residues 89–96 (LGRMTWKK) are Cytoplasmic-facing. A helical transmembrane segment spans residues 97–117 (FPVYVLGQFLGSFSAAATTYL). Residues 118–152 (IFYGAINHFAGGDLLVTGSKATANIFATYLPEYMT) lie on the Extracellular side of the membrane. The helical transmembrane segment at 153 to 173 (LWRGFLDEAFVTGMLQLCLFA) threads the bilayer. The Cytoplasmic segment spans residues 174 to 185 (ITDKKNSPALQG). A helical transmembrane segment spans residues 186–202 (TEPLVIGILVTVLGVSL). The Extracellular segment spans residues 203–206 (GMNS). Residues 207-220 (GYAINPSRDLPPRL) constitute an intramembrane region (discontinuously helical). Residues 211–213 (NPS) carry the NPA 2 motif. The Extracellular portion of the chain corresponds to 221 to 238 (FTFIAGWGKQVFRAGNNW). Residues 239-260 (WWVPVVAPLLGAYLGGIVYLGL) traverse the membrane as a helical segment. Over 261-303 (IHPSIPQDPQRLENFTARDQKVTASYKNAASANISGSVPLEHF) the chain is Cytoplasmic.

This sequence belongs to the MIP/aquaporin (TC 1.A.8) family. Homotetramer; each monomer provides an independent glycerol/water pore. Two homotetramers on opposing membranes can dimerize, forming a cell-cell junction. Interacts with PLIN1. Phosphorylation by PKA could prevent the interaction with PLIN1. As to expression, detected in proximal tubules in kidney. Detected in the capillary network between muscle fibers in skeletal muscle and heart, and in spermatids and on spermatozoa tails in testis and epididymis. Detected in white and brown adipose tissue, especially on small blood vessels (at protein level). Detected in kidney and white adipose tissue.

The protein localises to the cell membrane. The protein resides in the cytoplasmic vesicle membrane. Its subcellular location is the lipid droplet. The enzyme catalyses glycerol(in) = glycerol(out). It carries out the reaction H2O(in) = H2O(out). The catalysed reaction is urea(in) = urea(out). Glycerol transport is regulated by pH, with the porin being permeable to glycerol at pH 7.4 but not at pH 5.5. Water permeability, however, is not influenced by pH. Aquaglyceroporins form homotetrameric transmembrane channels, with each monomer independently mediating glycerol and water transport across the plasma membrane along their osmotic gradient. Could also be permeable to urea. Mediates the efflux of glycerol, formed upon triglyceride hydrolysis, to avoid its accumulation in adipocytes and to make it available to other tissues. In the kidney, mediates the reabsorption of glycerol, preventing its loss in urine, again participating to energy homeostasis. In pancreatic beta cells, it also mediates the efflux of glycerol, regulating its intracellular levels. This chain is Aquaporin-7, found in Mus musculus (Mouse).